Consider the following 628-residue polypeptide: MBT domain-containing protein 1 (628 aa).

The tract at residues 1–31 (MFDGYDSCSEDTSSSSSSEESEEEVAPLPSN) is disordered. Residues 45 to 80 (PDGKSGMATCEMCGMVGVRDAFYSKTKRFCSVSCSR) form an FCS-type zinc finger. Zn(2+) is bound by residues C54, C57, C74, and C78. K115 is modified (N6-acetyllysine). MBT repeat units lie at residues 141-245 (FSWG…LVPP), 253-350 (TNWK…IGHR), 351-456 (FKRS…LTPP), and 464-560 (FKWF…LQPP). Disordered regions lie at residues 560-590 (PASQ…HKKM) and 606-628 (NFLQ…KQEP). Residues 562–573 (SQSSRENQSASS) show a composition bias toward low complexity. Over residues 574–590 (KQKKKAKSQQYKGHKKM) the composition is skewed to basic residues. A compositionally biased stretch (polar residues) spans 609–620 (QGASDQESNGSA).

As to quaternary structure, monomer. Component of the NuA4 histone acetyltransferase complex. Interacts with EPC1; interaction is direct and promotes recruitment of MBTD1 into the NuA4 histone acetyltransferase complex.

It localises to the nucleus. The protein localises to the chromosome. Chromatin reader component of the NuA4 histone acetyltransferase complex, a multiprotein complex involved in transcriptional activation of select genes principally by acetylation of nucleosomal histones H4 and H2A. The NuA4 complex plays a direct role in repair of DNA double-strand breaks (DSBs) by promoting homologous recombination (HR). MBTD1 specifically recognizes and binds monomethylated and dimethylated 'Lys-20' on histone H4 (H4K20me1 and H4K20me2, respectively). In the NuA4 complex, MBTD1 promotes recruitment of the complex to H4K20me marks by competing with TP53BP1 for binding to H4K20me. Following recruitment to H4K20me at DNA breaks, the NuA4 complex catalyzes acetylation of 'Lys-15' on histone H2A (H2AK15), blocking the ubiquitination mark required for TP53BP1 localization at DNA breaks, thereby promoting homologous recombination (HR). The sequence is that of MBT domain-containing protein 1 from Homo sapiens (Human).